The following is a 283-amino-acid chain: Elongation factor Ts (283 aa).

Positions 79 to 82 are involved in Mg(2+) ion dislocation from EF-Tu; it reads TDFV.

Belongs to the EF-Ts family.

The protein localises to the cytoplasm. Its function is as follows. Associates with the EF-Tu.GDP complex and induces the exchange of GDP to GTP. It remains bound to the aminoacyl-tRNA.EF-Tu.GTP complex up to the GTP hydrolysis stage on the ribosome. The chain is Elongation factor Ts from Shewanella baltica (strain OS155 / ATCC BAA-1091).